The sequence spans 381 residues: Protein YkfC (381 aa).

A Reverse transcriptase domain is found at 72–337; sequence LRDELLSGHY…DGFIFLGHRL (266 aa). Mg(2+)-binding residues include Asp166, Asp284, and Asp285.

This sequence belongs to the bacterial reverse transcriptase family.

The polypeptide is Protein YkfC (ykfC) (Escherichia coli (strain K12)).